We begin with the raw amino-acid sequence, 200 residues long: ATP-dependent Clp protease proteolytic subunit (200 aa).

Serine 103 functions as the Nucleophile in the catalytic mechanism. Histidine 128 is an active-site residue.

It belongs to the peptidase S14 family. In terms of assembly, fourteen ClpP subunits assemble into 2 heptameric rings which stack back to back to give a disk-like structure with a central cavity, resembling the structure of eukaryotic proteasomes.

Its subcellular location is the cytoplasm. It catalyses the reaction Hydrolysis of proteins to small peptides in the presence of ATP and magnesium. alpha-casein is the usual test substrate. In the absence of ATP, only oligopeptides shorter than five residues are hydrolyzed (such as succinyl-Leu-Tyr-|-NHMec, and Leu-Tyr-Leu-|-Tyr-Trp, in which cleavage of the -Tyr-|-Leu- and -Tyr-|-Trp bonds also occurs).. Cleaves peptides in various proteins in a process that requires ATP hydrolysis. Has a chymotrypsin-like activity. Plays a major role in the degradation of misfolded proteins. The chain is ATP-dependent Clp protease proteolytic subunit from Vibrio parahaemolyticus serotype O3:K6 (strain RIMD 2210633).